We begin with the raw amino-acid sequence, 414 residues long: TnpB-like protein MJ1635 (414 aa).

Zn(2+) is bound by residues cysteine 329, cysteine 332, cysteine 346, and cysteine 349.

The protein in the N-terminal section; belongs to the transposase 2 family. This sequence in the C-terminal section; belongs to the transposase 35 family.

This is TnpB-like protein MJ1635 from Methanocaldococcus jannaschii (strain ATCC 43067 / DSM 2661 / JAL-1 / JCM 10045 / NBRC 100440) (Methanococcus jannaschii).